The primary structure comprises 610 residues: Elongation factor 4 (610 aa).

A tr-type G domain is found at 14–198 (ANIRNFSIVA…AIVTRLPPPQ (185 aa)). GTP contacts are provided by residues 26-31 (DHGKST) and 145-148 (NKVD).

It belongs to the TRAFAC class translation factor GTPase superfamily. Classic translation factor GTPase family. LepA subfamily.

The protein resides in the cell inner membrane. It catalyses the reaction GTP + H2O = GDP + phosphate + H(+). In terms of biological role, required for accurate and efficient protein synthesis under certain stress conditions. May act as a fidelity factor of the translation reaction, by catalyzing a one-codon backward translocation of tRNAs on improperly translocated ribosomes. Back-translocation proceeds from a post-translocation (POST) complex to a pre-translocation (PRE) complex, thus giving elongation factor G a second chance to translocate the tRNAs correctly. Binds to ribosomes in a GTP-dependent manner. In Nitrobacter hamburgensis (strain DSM 10229 / NCIMB 13809 / X14), this protein is Elongation factor 4.